The sequence spans 211 residues: ATP phosphoribosyltransferase (211 aa).

The protein belongs to the ATP phosphoribosyltransferase family. Short subfamily. In terms of assembly, heteromultimer composed of HisG and HisZ subunits.

It is found in the cytoplasm. It carries out the reaction 1-(5-phospho-beta-D-ribosyl)-ATP + diphosphate = 5-phospho-alpha-D-ribose 1-diphosphate + ATP. It participates in amino-acid biosynthesis; L-histidine biosynthesis; L-histidine from 5-phospho-alpha-D-ribose 1-diphosphate: step 1/9. Functionally, catalyzes the condensation of ATP and 5-phosphoribose 1-diphosphate to form N'-(5'-phosphoribosyl)-ATP (PR-ATP). Has a crucial role in the pathway because the rate of histidine biosynthesis seems to be controlled primarily by regulation of HisG enzymatic activity. This chain is ATP phosphoribosyltransferase, found in Lacticaseibacillus paracasei (strain ATCC 334 / BCRC 17002 / CCUG 31169 / CIP 107868 / KCTC 3260 / NRRL B-441) (Lactobacillus paracasei).